The chain runs to 152 residues: D-aminoacyl-tRNA deacylase (152 aa).

The Gly-cisPro motif, important for rejection of L-amino acids signature appears at 142–143 (GP).

This sequence belongs to the DTD family. In terms of assembly, homodimer.

It localises to the cytoplasm. The catalysed reaction is glycyl-tRNA(Ala) + H2O = tRNA(Ala) + glycine + H(+). It carries out the reaction a D-aminoacyl-tRNA + H2O = a tRNA + a D-alpha-amino acid + H(+). Functionally, an aminoacyl-tRNA editing enzyme that deacylates mischarged D-aminoacyl-tRNAs. Also deacylates mischarged glycyl-tRNA(Ala), protecting cells against glycine mischarging by AlaRS. Acts via tRNA-based rather than protein-based catalysis; rejects L-amino acids rather than detecting D-amino acids in the active site. By recycling D-aminoacyl-tRNA to D-amino acids and free tRNA molecules, this enzyme counteracts the toxicity associated with the formation of D-aminoacyl-tRNA entities in vivo and helps enforce protein L-homochirality. This chain is D-aminoacyl-tRNA deacylase, found in Paraburkholderia phymatum (strain DSM 17167 / CIP 108236 / LMG 21445 / STM815) (Burkholderia phymatum).